We begin with the raw amino-acid sequence, 197 residues long: Glycerol-3-phosphate acyltransferase (197 aa).

5 helical membrane passes run 2–22 (LDVI…AIVV), 53–73 (AGIT…LAWL), 78–98 (PVVA…PVYF), 112–132 (VILA…LAVA), and 152–174 (YMLW…AAIV).

Belongs to the PlsY family. Probably interacts with PlsX.

The protein resides in the cell inner membrane. It catalyses the reaction an acyl phosphate + sn-glycerol 3-phosphate = a 1-acyl-sn-glycero-3-phosphate + phosphate. It functions in the pathway lipid metabolism; phospholipid metabolism. Its function is as follows. Catalyzes the transfer of an acyl group from acyl-phosphate (acyl-PO(4)) to glycerol-3-phosphate (G3P) to form lysophosphatidic acid (LPA). This enzyme utilizes acyl-phosphate as fatty acyl donor, but not acyl-CoA or acyl-ACP. This is Glycerol-3-phosphate acyltransferase from Halorhodospira halophila (strain DSM 244 / SL1) (Ectothiorhodospira halophila (strain DSM 244 / SL1)).